The primary structure comprises 692 residues: Formate hydrogenlyase transcriptional activator (692 aa).

The 143-residue stretch at 202 to 344 (DIDELVSEVA…QIAERVAIAV (143 aa)) folds into the GAF domain. The Sigma-54 factor interaction domain maps to 381-610 (IIGRSEAMYN…LENVVERAVL (230 aa)). ATP contacts are provided by residues 409 to 416 (GETGTGKE) and 472 to 481 (ADKSSLFLDE). Residues 663–682 (PKGAAQRLGLKRTTLLSRMK) constitute a DNA-binding region (H-T-H motif).

Required for induction of expression of the formate dehydrogenase H and hydrogenase-3 structural genes. The sequence is that of Formate hydrogenlyase transcriptional activator (fhlA) from Salmonella typhimurium (strain LT2 / SGSC1412 / ATCC 700720).